The primary structure comprises 83 residues: Ardiscretin (83 aa).

The signal sequence occupies residues 1 to 20; that stretch reads MKGMIMLISCLMLIDVVVES. The LCN-type CS-alpha/beta domain occupies 21–82; the sequence is KNGYIIEPKG…IFDYYNNKCG (62 aa). Intrachain disulfides connect Cys-31/Cys-81, Cys-35/Cys-57, Cys-43/Cys-62, and Cys-47/Cys-64. At Cys-81 the chain carries Cysteine amide.

As to expression, expressed by the venom gland.

It is found in the secreted. Functionally, inhibits the sodium (Nav) currents in an apparent irreversible manner. Produces small depolarization and induces repetitive firing in squid axons. Is specific for arthropods (crickets, triatomides, crabs and squids), but is non-toxic to mice. Shows antibacterial activity against both Gram-positive and Gram-negative bacteria. This is Ardiscretin from Tityus discrepans (Venezuelan scorpion).